The sequence spans 288 residues: Ribosomal RNA small subunit methyltransferase A (288 aa).

The S-adenosyl-L-methionine site is built by Asn-18, Leu-20, Gly-45, Glu-66, Asp-91, and Asn-118.

Belongs to the class I-like SAM-binding methyltransferase superfamily. rRNA adenine N(6)-methyltransferase family. RsmA subfamily.

Its subcellular location is the cytoplasm. The enzyme catalyses adenosine(1518)/adenosine(1519) in 16S rRNA + 4 S-adenosyl-L-methionine = N(6)-dimethyladenosine(1518)/N(6)-dimethyladenosine(1519) in 16S rRNA + 4 S-adenosyl-L-homocysteine + 4 H(+). In terms of biological role, specifically dimethylates two adjacent adenosines (A1518 and A1519) in the loop of a conserved hairpin near the 3'-end of 16S rRNA in the 30S particle. May play a critical role in biogenesis of 30S subunits. In Pasteurella multocida (strain Pm70), this protein is Ribosomal RNA small subunit methyltransferase A.